A 430-amino-acid chain; its full sequence is tRNA(Ile)-lysidine synthase (430 aa).

21 to 26 (SGGLDS) provides a ligand contact to ATP.

The protein belongs to the tRNA(Ile)-lysidine synthase family.

The protein localises to the cytoplasm. It catalyses the reaction cytidine(34) in tRNA(Ile2) + L-lysine + ATP = lysidine(34) in tRNA(Ile2) + AMP + diphosphate + H(+). In terms of biological role, ligates lysine onto the cytidine present at position 34 of the AUA codon-specific tRNA(Ile) that contains the anticodon CAU, in an ATP-dependent manner. Cytidine is converted to lysidine, thus changing the amino acid specificity of the tRNA from methionine to isoleucine. The chain is tRNA(Ile)-lysidine synthase from Salmonella paratyphi A (strain ATCC 9150 / SARB42).